Here is a 120-residue protein sequence, read N- to C-terminus: Small ribosomal subunit protein uS11 (120 aa).

This sequence belongs to the universal ribosomal protein uS11 family. Part of the 30S ribosomal subunit. Interacts with proteins S7 and S18. Binds to IF-3.

Its function is as follows. Located on the platform of the 30S subunit, it bridges several disparate RNA helices of the 16S rRNA. Forms part of the Shine-Dalgarno cleft in the 70S ribosome. This chain is Small ribosomal subunit protein uS11, found in Neorickettsia sennetsu (strain ATCC VR-367 / Miyayama) (Ehrlichia sennetsu).